Here is a 499-residue protein sequence, read N- to C-terminus: Endosomal/lysosomal proton channel TMEM175 (499 aa).

The Cytoplasmic segment spans residues 1-30 (MSRLQTEEQAVDSEGDSSLHRRNEEGTQSS). A disordered region spans residues 1-30 (MSRLQTEEQAVDSEGDSSLHRRNEEGTQSS). T6 carries the post-translational modification Phosphothreonine. A helical transmembrane segment spans residues 31-53 (HRMLGFSDALLSIIATVMILPVT). Positions 32 to 38 (RMLGFSD) match the RxxxFSD motif 1 motif. Topologically, residues 54–74 (HTEISPEQQFDKSIQKLLATR) are lumenal. A short helix H1-1 region spans residues 55–60 (TEISPE). Residues 62–68 (QFDKSIQ) form a short helix H2-1 region. Residues 75-97 (IAVYLMTFLIVTVAWTAHTRLFQ) traverse the membrane as a helical segment. Residues 98-103 (VVGKID) lie on the Cytoplasmic side of the membrane. Residues 104 to 125 (DTLALLNLACMMTITLLPYTFS) traverse the membrane as a helical segment. Over 126–135 (LMVTFPDVPL) the chain is Lumenal. Residues 136-157 (GIFLFCVCVIAIGSVQAMIVGY) form a helical membrane-spanning segment. Residues 158-181 (AFHFPHLLNPQIQCSTHRDLSRRH) are Cytoplasmic-facing. The helical transmembrane segment at 182 to 202 (ILHLVLRGPALCFVAAVFSLF) threads the bilayer. Residues 203–207 (FFPLS) are Lumenal-facing. The helical transmembrane segment at 208–227 (YLLMVTVIFLPHISKATTWC) threads the bilayer. At 228–254 (KDKLMGQRESPAHDMEPFSIDLHAPLS) the chain is on the cytoplasmic side. A helical membrane pass occupies residues 255 to 279 (KERVEAFSDGVYAIVATLLILDICE). The RxxxFSD motif 2 signature appears at 257–263 (RVEAFSD). Topologically, residues 280-306 (DNVPDPKDVQEKFSGSLVAALGAYGPQ) are lumenal. The segment at 285-293 (PKDVQEKFS) is short helix H1-2. The interval 295–301 (SLVAALG) is short helix H2-2. Residues 307–329 (FLAYFGSFATVGLLWFAHHSLFL) traverse the membrane as a helical segment. At 330–335 (HVRKAT) the chain is on the cytoplasmic side. A helical membrane pass occupies residues 336–357 (QTMGLLNILSLAFVGGLPLAYQ). Residues 358 to 372 (QTSAFARQPHDELER) lie on the Lumenal side of the membrane. A helical transmembrane segment spans residues 373 to 393 (VRVSCAIIFFASIFQFAIWTT). Residues 394-413 (ALLHQTETLQPAVQFGGQEH) lie on the Cytoplasmic side of the membrane. Residues 414 to 437 (AFMFAKLALYPCASLLAFAATCLL) form a helical membrane-spanning segment. Residues 438–439 (SR) lie on the Lumenal side of the membrane. The helical transmembrane segment at 440-466 (FSTAIFHLMQISVPFAFLLLRLLVRLA) threads the bilayer. Topologically, residues 467–499 (LAGLQVLRGLWPHHPQQDQSEPEAQSQLLPDPC) are cytoplasmic.

It belongs to the TMEM175 family. Homodimer. Interacts with AKT (AKT1, AKT2 or AKT3); leading to formation of the lysoK(GF) complex, which activates the channel. Interacts with LAMP1; inhibiting the proton channel activity of TMEM175. Interacts with LAMP2; inhibiting the proton channel activity of TMEM175.

It is found in the endosome membrane. The protein resides in the lysosome membrane. It carries out the reaction H(+)(in) = H(+)(out). It catalyses the reaction K(+)(in) = K(+)(out). Active at low pH (under pH 4.6): proton channel activity is activated by luminal side protons. Polyunsaturated fatty acids, such as arachidonic acid, also activate the channel activity. Proton channel activity is directly inhibited by LAMP1 or LAMP2, facilitating lysosomal acidification. Channel activity is activated following interaction with AKT (AKT1, AKT2 or AKT3): interaction promotes activation from closed to an open state. Activation by AKT is independent of AKT serine/threonine-protein kinase activity. In terms of biological role, proton-activated proton channel that catalyzes proton efflux from endosomes and lysosomes to maintain a steady-state pH. Activated at low pH (under pH 4.6) by luminal side protons: selectively mediates lysosomal proton release from lysosomes, eliciting a proton leak that balances V-ATPase activity to maintain pH homeostasis. Regulation of lumenal pH stability is required for autophagosome-lysosome fusion. Also acts as a potassium channel at higher pH, regulating potassium conductance in endosomes and lysosomes. Constitutes the pore-forming subunit of the lysoK(GF) complex, a complex activated by extracellular growth factors. The lysoK(GF) complex is composed of TMEM175 and AKT (AKT1, AKT2 or AKT3), a major target of growth factor receptors: in the complex, TMEM175 channel is opened by conformational changes by AKT, leading to its activation. The lysoK(GF) complex is required to protect neurons against stress-induced damage. The sequence is that of Endosomal/lysosomal proton channel TMEM175 from Mus musculus (Mouse).